Reading from the N-terminus, the 344-residue chain is Dihydroorotate dehydrogenase (quinone) (344 aa).

FMN-binding positions include 65–69 (AGLDK) and threonine 89. Residue lysine 69 participates in substrate binding. 114–118 (NRMGF) provides a ligand contact to substrate. 2 residues coordinate FMN: asparagine 145 and asparagine 178. Asparagine 178 serves as a coordination point for substrate. Serine 181 (nucleophile) is an active-site residue. A substrate-binding site is contributed by asparagine 183. Positions 223 and 251 each coordinate FMN. 252 to 253 (NT) provides a ligand contact to substrate. FMN is bound by residues glycine 274, glycine 303, and 324–325 (YT).

It belongs to the dihydroorotate dehydrogenase family. Type 2 subfamily. In terms of assembly, monomer. FMN serves as cofactor.

Its subcellular location is the cell membrane. The enzyme catalyses (S)-dihydroorotate + a quinone = orotate + a quinol. Its pathway is pyrimidine metabolism; UMP biosynthesis via de novo pathway; orotate from (S)-dihydroorotate (quinone route): step 1/1. Its function is as follows. Catalyzes the conversion of dihydroorotate to orotate with quinone as electron acceptor. In Ralstonia nicotianae (strain ATCC BAA-1114 / GMI1000) (Ralstonia solanacearum), this protein is Dihydroorotate dehydrogenase (quinone).